Consider the following 343-residue polypeptide: MTQAHTATTVTTVSVDSLRQSARSHALPDDAAWRVDDVAALFALPFNDLLFRAQQVHREHFDANTVQLSTLLSIKTGGCEEDCGYCPQSAHHDAGVKAEKLMALDEVLDAARAAKANGATRFCMGAAWRSPKDRHLEPVMDMVREVKAMGLETCVTLGMLKAEQAQQLKEAGLDYYNHNLDTSPEFYGKIITTRTYQDRLDTIGHVRDAGINVCCGGIVGMGEAREARAGLIAQLANMDPYPESVPINNLVQVEGTPLAGTEALDPFEFVRTIAVARITMPRAMVRLSAGREAMDEALQALCFMAGANSIFYGEKLLTTGNPQADRDRALLARLDIRAEGYAG.

One can recognise a Radical SAM core domain in the interval 64 to 291 (NTVQLSTLLS…RAMVRLSAGR (228 aa)). [4Fe-4S] cluster is bound by residues Cys-79, Cys-83, and Cys-86. [2Fe-2S] cluster contacts are provided by Cys-123, Cys-154, Cys-214, and Arg-286.

This sequence belongs to the radical SAM superfamily. Biotin synthase family. In terms of assembly, homodimer. Requires [4Fe-4S] cluster as cofactor. The cofactor is [2Fe-2S] cluster.

It catalyses the reaction (4R,5S)-dethiobiotin + (sulfur carrier)-SH + 2 reduced [2Fe-2S]-[ferredoxin] + 2 S-adenosyl-L-methionine = (sulfur carrier)-H + biotin + 2 5'-deoxyadenosine + 2 L-methionine + 2 oxidized [2Fe-2S]-[ferredoxin]. It functions in the pathway cofactor biosynthesis; biotin biosynthesis; biotin from 7,8-diaminononanoate: step 2/2. In terms of biological role, catalyzes the conversion of dethiobiotin (DTB) to biotin by the insertion of a sulfur atom into dethiobiotin via a radical-based mechanism. The chain is Biotin synthase from Cupriavidus necator (strain ATCC 17699 / DSM 428 / KCTC 22496 / NCIMB 10442 / H16 / Stanier 337) (Ralstonia eutropha).